The sequence spans 71 residues: Conotoxin Tx11.3 (71 aa).

The first 19 residues, 1 to 19, serve as a signal peptide directing secretion; that stretch reads MKLCVTFLLVLVILPSVTG. The propeptide occupies 20-47; it reads VKSSERTLSGAALRGDRGTCSGRGQECK. Disulfide bonds link Cys39–Cys53, Cys46–Cys58, Cys52–Cys63, and Cys57–Cys70.

Belongs to the I1 superfamily. As to expression, expressed by the venom duct.

The protein localises to the secreted. The polypeptide is Conotoxin Tx11.3 (Conus textile (Cloth-of-gold cone)).